A 230-amino-acid chain; its full sequence is Probable cytokinin riboside 5'-monophosphate phosphoribohydrolase LOG4 (230 aa).

Substrate is bound by residues E91, 109–110, and 126–132; these read RK and GYGTIEE.

It belongs to the LOG family.

It carries out the reaction N(6)-(dimethylallyl)adenosine 5'-phosphate + H2O = N(6)-dimethylallyladenine + D-ribose 5-phosphate. It catalyses the reaction 9-ribosyl-trans-zeatin 5'-phosphate + H2O = trans-zeatin + D-ribose 5-phosphate. Its function is as follows. Cytokinin-activating enzyme working in the direct activation pathway. Phosphoribohydrolase that converts inactive cytokinin nucleotides to the biologically active free-base forms. The chain is Probable cytokinin riboside 5'-monophosphate phosphoribohydrolase LOG4 (LOGL4) from Oryza sativa subsp. japonica (Rice).